A 1185-amino-acid polypeptide reads, in one-letter code: Chromosome partition protein Smc (1185 aa).

ATP is bound at residue P34–N41. Coiled coils occupy residues W174–I376 and E412–V526. The 111-residue stretch at V534–I644 folds into the SMC hinge domain. Residues N679–G1039 adopt a coiled-coil conformation.

Belongs to the SMC family. In terms of assembly, homodimer.

It localises to the cytoplasm. Its function is as follows. Required for chromosome condensation and partitioning. The sequence is that of Chromosome partition protein Smc from Clostridium kluyveri (strain NBRC 12016).